Here is a 397-residue protein sequence, read N- to C-terminus: uncharacterized protein (397 aa).

4 helical membrane passes run 62–79 (VLLFGILIFSIFVALIAI), 92–109 (WYGLLAFGVLTSLELVVT), 135–154 (VVFLPLICVYSLSILYSTLS), and 167–189 (AFLKTMLFTLLICSFILNFFPGI).

Its subcellular location is the cell membrane. This is an uncharacterized protein from Archaeoglobus fulgidus (strain ATCC 49558 / DSM 4304 / JCM 9628 / NBRC 100126 / VC-16).